A 231-amino-acid chain; its full sequence is Orotidine 5'-phosphate decarboxylase (231 aa).

Substrate-binding positions include Asp11, Lys33, 60–69, Thr117, Arg178, Gln187, Gly207, and Arg208; that span reads DLKFHDIPNT. The Proton donor role is filled by Lys62.

The protein belongs to the OMP decarboxylase family. Type 1 subfamily. Homodimer.

The catalysed reaction is orotidine 5'-phosphate + H(+) = UMP + CO2. It functions in the pathway pyrimidine metabolism; UMP biosynthesis via de novo pathway; UMP from orotate: step 2/2. In terms of biological role, catalyzes the decarboxylation of orotidine 5'-monophosphate (OMP) to uridine 5'-monophosphate (UMP). The chain is Orotidine 5'-phosphate decarboxylase from Nitrosomonas eutropha (strain DSM 101675 / C91 / Nm57).